Consider the following 155-residue polypeptide: MAEAAPQDTQQHFAIQRIFLKDVSFEAPNSPVMFQKEWNPDVKLDLDTQSRELGEGVYEVILRLTVTVKNAEETAFLCEVQQGGIFTAEKMEAGQLAHCLGAFCPNILFPYARETISSLVVKGTFPQLNLAPVNFDALFMNYLQQQAAQQGAEQA.

It belongs to the SecB family. Homotetramer, a dimer of dimers. One homotetramer interacts with 1 SecA dimer.

It is found in the cytoplasm. Its function is as follows. One of the proteins required for the normal export of preproteins out of the cell cytoplasm. It is a molecular chaperone that binds to a subset of precursor proteins, maintaining them in a translocation-competent state. It also specifically binds to its receptor SecA. The chain is Protein-export protein SecB from Vibrio vulnificus (strain CMCP6).